A 283-amino-acid chain; its full sequence is ATP phosphoribosyltransferase (283 aa).

The protein belongs to the ATP phosphoribosyltransferase family. Long subfamily. Mg(2+) serves as cofactor.

The protein localises to the cytoplasm. The catalysed reaction is 1-(5-phospho-beta-D-ribosyl)-ATP + diphosphate = 5-phospho-alpha-D-ribose 1-diphosphate + ATP. Its pathway is amino-acid biosynthesis; L-histidine biosynthesis; L-histidine from 5-phospho-alpha-D-ribose 1-diphosphate: step 1/9. Feedback inhibited by histidine. Catalyzes the condensation of ATP and 5-phosphoribose 1-diphosphate to form N'-(5'-phosphoribosyl)-ATP (PR-ATP). Has a crucial role in the pathway because the rate of histidine biosynthesis seems to be controlled primarily by regulation of HisG enzymatic activity. This chain is ATP phosphoribosyltransferase, found in Bifidobacterium longum subsp. infantis (strain ATCC 15697 / DSM 20088 / JCM 1222 / NCTC 11817 / S12).